A 126-amino-acid chain; its full sequence is Flagellar protein FliT (126 aa).

The segment at 1 to 50 is required for homodimerization; sequence MVSPHRLLKDYQQLLSLSQKILHLAISGQWDTLVEQEIVYVQSVEGLVNT. A fliD binding region spans residues 60–98; the sequence is MRLHLRQILQEVMDNEAKVKQLLQKRMDELSSLMGQSLK.

Belongs to the FliT family. Homodimer. Interacts with FliD and FlhC.

The protein resides in the cytoplasm. The protein localises to the cytosol. Its function is as follows. Dual-function protein that regulates the transcription of class 2 flagellar operons and that also acts as an export chaperone for the filament-capping protein FliD. As a transcriptional regulator, acts as an anti-FlhDC factor; it directly binds FlhC, thus inhibiting the binding of the FlhC/FlhD complex to class 2 promoters, resulting in decreased expression of class 2 flagellar operons. As a chaperone, effects FliD transition to the membrane by preventing its premature polymerization, and by directing it to the export apparatus. The chain is Flagellar protein FliT from Pectobacterium atrosepticum (strain SCRI 1043 / ATCC BAA-672) (Erwinia carotovora subsp. atroseptica).